The chain runs to 1317 residues: MSGLPVSHVGEKVSGGVISTGSPTVHVGSSAVGLADRVSACVPLVGKPVNPMLGSKLLPEEVDFALAAPDTFTFARGYLSSNPRIGRLGRGWWLPGESMHLELSEDACVLVDAQGRRIGFPALAPGAQHYSGSEELWLRRGGSSGGEAQAWRGRWAAVPAELQTQEGSVLVLSGHSYLHFQRCPDGIWRLQASFGRAGYRTEFRWSGRGLLTGVRDSAGRSYALVYQQACEPSEGDDGLRLFGVILASHDGPPPDYIDPQSPGLDWLVRYQFSDSGDLIAVRDRLGQVVRVFAWREHMLVAHGEPGGLEVRYEWDVHAPHGRVVKQIEAGGLTRTFRYLRDATEVSDSLGRVERYEFAGEGGQRRWTALVRADGSRSEFDYDLFGRLVAMRDPLGRETRRRRDGQGRMLEEESPGKARYRKRVDEETGLLVELEDAMQRRWTFERDERGNATTVRGPAGSTRYAYEDPRLPDRPTRIVDPRGGERRLEWNRFGLLAALTDCSGQVWRYDYDNEGRLVASSDPLGQLTRRRYDPLGQLIGLELADGSALSYEYDALGRQTRIADAEGHATLFSWGHGDLLARVSDAGGGELSYLHDEAGRLVALTNENGVQAQFRYDLLDRLVEETGFDGRRQRYRYNAADELIAREDADGRETTYAYDRDGRLASIRVPATEHAPALVERYRWLADGRLASAGGADCEVRYTYDEVGNLRLESQVHADGWVYSVEHSHDALGVRQTSRYGDAPPVAWLTYGPGHLHGALVGAVELAFERDALHREVRRDARRDGQDDALFTQERQHAPLGRLQRSRLRLAGGFDWQRGYRYDGLGQLVGIDDNQYPSVRYEYDLGGRLLASRRAGAAASTYRYDAAGNRLEGVGEHAREDARQAFAENELYRSGFSRSETRASQAGEGPARWAGNRVERIAGNRYRFDALGNLVERIGADGERLRLAYDGAQRLVHLTRDYADGTRLEARYRYDALSRRIAKVVLRDGVEQQVRFGWDGDRQCAEAFARELRTTVHEPGGFVPLLRLEQACEPDPPELLQLRQAFAAEGQPLPAQCVPALGEARIAFFHTDHLGTPLQLSDERGQLRWQGVPDDWRAVAPERQPGAQPIRFQGQYHDEESGLYYNRYRYYLPEAGRYASQDPLGLGGGPNPYAYALNAPTLAYDPTGLIIPLVVIGAFAARAAIGAALGAGIELGMQTGKQVLGQMKDNWDSDRDLTDIKWKCIDINWKHVGASAAIGTVAPGMLSTGKTVVQSAKAIRTLSGQAANTANRAAKLAARKAAHADTIKKAVATQAAWQTGKQIVKCPLKDEEEECPPQ.

The disordered stretch occupies residues 395 to 419; it reads GRETRRRRDGQGRMLEEESPGKARY. Residues 403 to 415 show a composition bias toward basic and acidic residues; the sequence is DGQGRMLEEESPG.

In terms of biological role, toxin secreted by the H1 type VI (H1-T6SS) secretion system that acts on bacterial target cells. The producing bacterium is protected by a cognate immunity protein. In Pseudomonas aeruginosa (strain ATCC 15692 / DSM 22644 / CIP 104116 / JCM 14847 / LMG 12228 / 1C / PRS 101 / PAO1), this protein is Toxin protein Tse5.